A 367-amino-acid chain; its full sequence is Chorismate synthase (367 aa).

The NADP(+) site is built by Arg-48 and Arg-54. Residues 125–127, 238–239, Gly-278, 293–297, and Arg-319 contribute to the FMN site; these read RSS, NA, and KPTSS.

The protein belongs to the chorismate synthase family. Homotetramer. FMNH2 serves as cofactor.

It carries out the reaction 5-O-(1-carboxyvinyl)-3-phosphoshikimate = chorismate + phosphate. It functions in the pathway metabolic intermediate biosynthesis; chorismate biosynthesis; chorismate from D-erythrose 4-phosphate and phosphoenolpyruvate: step 7/7. Its function is as follows. Catalyzes the anti-1,4-elimination of the C-3 phosphate and the C-6 proR hydrogen from 5-enolpyruvylshikimate-3-phosphate (EPSP) to yield chorismate, which is the branch point compound that serves as the starting substrate for the three terminal pathways of aromatic amino acid biosynthesis. This reaction introduces a second double bond into the aromatic ring system. The protein is Chorismate synthase of Stenotrophomonas maltophilia (strain K279a).